A 181-amino-acid polypeptide reads, in one-letter code: ATP synthase subunit delta (181 aa).

This sequence belongs to the ATPase delta chain family. F-type ATPases have 2 components, F(1) - the catalytic core - and F(0) - the membrane proton channel. F(1) has five subunits: alpha(3), beta(3), gamma(1), delta(1), epsilon(1). F(0) has three main subunits: a(1), b(2) and c(10-14). The alpha and beta chains form an alternating ring which encloses part of the gamma chain. F(1) is attached to F(0) by a central stalk formed by the gamma and epsilon chains, while a peripheral stalk is formed by the delta and b chains.

It localises to the cell inner membrane. Functionally, f(1)F(0) ATP synthase produces ATP from ADP in the presence of a proton or sodium gradient. F-type ATPases consist of two structural domains, F(1) containing the extramembraneous catalytic core and F(0) containing the membrane proton channel, linked together by a central stalk and a peripheral stalk. During catalysis, ATP synthesis in the catalytic domain of F(1) is coupled via a rotary mechanism of the central stalk subunits to proton translocation. Its function is as follows. This protein is part of the stalk that links CF(0) to CF(1). It either transmits conformational changes from CF(0) to CF(1) or is implicated in proton conduction. In Protochlamydia amoebophila (strain UWE25), this protein is ATP synthase subunit delta.